We begin with the raw amino-acid sequence, 279 residues long: MNIENKEITSSWFTNLRDLLCKEFEKIEEEYAQTKGLKPAKFVRSSWQRNGGGGGVMSLMKGAVFEKVGVNISTVFGKISPEFRNEIPGAELDGKFFATGISLVAHLKSPLIPAMHFNTRYIETSKSWFGGGGDLTPFYPEKNETVKFHAAFKEACDKYDSSYYPKFKKQCDEYFYLKHRKEPRGVGGIFYDYLNNGNFEQDFAFTQDVGKALLSVYPEIVRSKLFLPWTAEQKEYQLIRRGRYVEFNLLYDRGTKFGLMTDGNVEAILMSLPPEVKFN.

Ser-102 contributes to the substrate binding site. Residues His-106 and His-116 each coordinate a divalent metal cation. The Proton donor role is filled by His-116. 118-120 serves as a coordination point for substrate; the sequence is NTR. A divalent metal cation-binding residues include His-149 and His-179. An important for dimerization region spans residues 244–279; that stretch reads YVEFNLLYDRGTKFGLMTDGNVEAILMSLPPEVKFN.

It belongs to the aerobic coproporphyrinogen-III oxidase family. As to quaternary structure, homodimer. A divalent metal cation is required as a cofactor.

It localises to the cytoplasm. The enzyme catalyses coproporphyrinogen III + O2 + 2 H(+) = protoporphyrinogen IX + 2 CO2 + 2 H2O. It functions in the pathway porphyrin-containing compound metabolism; protoporphyrin-IX biosynthesis; protoporphyrinogen-IX from coproporphyrinogen-III (O2 route): step 1/1. Involved in the heme biosynthesis. Catalyzes the aerobic oxidative decarboxylation of propionate groups of rings A and B of coproporphyrinogen-III to yield the vinyl groups in protoporphyrinogen-IX. This is Oxygen-dependent coproporphyrinogen-III oxidase from Rickettsia conorii (strain ATCC VR-613 / Malish 7).